A 382-amino-acid chain; its full sequence is tRNA(Ile)-lysidine synthase (382 aa).

An ATP-binding site is contributed by 50-55 (SGGRDS).

It belongs to the tRNA(Ile)-lysidine synthase family.

The protein resides in the cytoplasm. It catalyses the reaction cytidine(34) in tRNA(Ile2) + L-lysine + ATP = lysidine(34) in tRNA(Ile2) + AMP + diphosphate + H(+). Functionally, ligates lysine onto the cytidine present at position 34 of the AUA codon-specific tRNA(Ile) that contains the anticodon CAU, in an ATP-dependent manner. Cytidine is converted to lysidine, thus changing the amino acid specificity of the tRNA from methionine to isoleucine. The protein is tRNA(Ile)-lysidine synthase of Bifidobacterium animalis subsp. lactis (strain AD011).